A 344-amino-acid chain; its full sequence is 5,10-methenyltetrahydromethanopterin hydrogenase (344 aa).

This sequence belongs to the HMD family. Homotetramer.

It carries out the reaction 5,10-methenyl-5,6,7,8-tetrahydromethanopterin + H2 = 5,10-methylenetetrahydromethanopterin + H(+). It participates in one-carbon metabolism; methanogenesis from CO(2); 5,10-methylene-5,6,7,8-tetrahydromethanopterin from 5,10-methenyl-5,6,7,8-tetrahydromethanopterin (hydrogen route): step 1/1. Its activity is regulated as follows. Activity requires salt; 100 mM sodium or potassium salts of chloride, phosphate or sulfate are equally effective. Inactivated by O(2). Functionally, catalyzes the reversible reduction of methenyl-H(4)MPT(+) to methylene-H(4)MPT. This chain is 5,10-methenyltetrahydromethanopterin hydrogenase, found in Methanothermobacter marburgensis (strain ATCC BAA-927 / DSM 2133 / JCM 14651 / NBRC 100331 / OCM 82 / Marburg) (Methanobacterium thermoautotrophicum).